The sequence spans 385 residues: Tuliposide A-converting enzyme 1, chloroplastic (385 aa).

The transit peptide at 1–77 directs the protein to the chloroplast; it reads MSVASFFSSL…PSPSLSPTPT (77 aa). Catalysis depends on Ser-235, which acts as the Acyl-ester intermediate. Catalysis depends on charge relay system residues Asp-327 and His-359.

The protein belongs to the AB hydrolase superfamily. In terms of assembly, homodimer. As to expression, expressed in roots, stems, leaves, petals, stamens and pistils, but not in bulb scales.

It is found in the plastid. The protein localises to the chloroplast. The enzyme catalyses 6-tuliposide A = tulipalin A + D-glucose. Its activity is regulated as follows. Inhibited by NaF, AgNO(3), HgCl(2), CuSO(4) and phenylmethylsulfonyl fluoride (PMSF). Its function is as follows. Lactone-forming carboxylesterases, specifically catalyzing intramolecular transesterification, but not hydrolysis. Involved in the biosynthesis of tulipalins, defensive chemicals that show antimicrobial activities against a broad range of strains of bacteria and fungi. Substrates are 6-tuliposide A &gt; 6-tuliposide B. This Tulipa gesneriana (Garden tulip) protein is Tuliposide A-converting enzyme 1, chloroplastic (TCEA1).